A 633-amino-acid polypeptide reads, in one-letter code: GTPase-activating protein GYP3 (633 aa).

The segment at alanine 26–aspartate 127 is disordered. A compositionally biased stretch (basic and acidic residues) spans phenylalanine 37–serine 47. Acidic residues predominate over residues glycine 99 to glutamate 115. Serine 147 carries the post-translational modification Phosphoserine. The Rab-GAP TBC domain occupies glycine 223–glutamate 456. Serine 484 carries the phosphoserine modification.

It is found in the cytoplasm. The protein resides in the bud. The protein localises to the bud neck. Its function is as follows. Regulates exocytosis by functioning as a GAP for SEC4. Stimulates specifically the GTPase activity of YPT6. Also required for efficient polarization of the actin patches. This chain is GTPase-activating protein GYP3 (MSB3), found in Saccharomyces cerevisiae (strain ATCC 204508 / S288c) (Baker's yeast).